We begin with the raw amino-acid sequence, 171 residues long: uncharacterized protein (171 aa).

Disordered stretches follow at residues 68-124 and 140-171; these read NKNN…ASQQ and GDED…SIKN. The span at 141–160 shows a compositional bias: basic and acidic residues; that stretch reads DEDKGMDSTLKLPERTKRDS.

Belongs to the asfivirus H171R family.

It localises to the virion. This is an uncharacterized protein from Ornithodoros (relapsing fever ticks).